The sequence spans 349 residues: Probable G-protein coupled receptor 21 (349 aa).

The Extracellular segment spans residues 1–32; that stretch reads MNSTLDGNQSSHPFCLLAFGYLETVNFCLLEV. Asn-2 and Asn-8 each carry an N-linked (GlcNAc...) asparagine glycan. The chain crosses the membrane as a helical span at residues 33–53; the sequence is LIIVFLTVLIISGNIIVIFVF. Over 54 to 75 the chain is Cytoplasmic; sequence HCAPLLNHHTTSYFIQTMAYAD. Residues 76 to 96 form a helical membrane-spanning segment; the sequence is LFVGVSCVVPSLSLLHHPLPV. Residues 97–104 are Extracellular-facing; it reads EESLTCQI. The chain crosses the membrane as a helical span at residues 105–125; the sequence is FGFVVSVLKSVSMASLACISI. Residues 126-147 are Cytoplasmic-facing; sequence DRYIAITKPLTYNTLVTPWRLR. The chain crosses the membrane as a helical span at residues 148–168; sequence LCIFLIWLYSTLVFLPSFFHW. Topologically, residues 169–191 are extracellular; sequence GKPGYHGDVFQWCAESWHTDSYF. Residues 192-212 traverse the membrane as a helical segment; sequence TLFIVMMLYAPAALIVCFTYF. Residues 213 to 252 are Cytoplasmic-facing; the sequence is NIFRICQQHTKDISERQARFSSQSGETGEVQACPDKRYAM. A helical membrane pass occupies residues 253 to 273; sequence VLFRITSVFYILWLPYIIYFL. Topologically, residues 274 to 283 are extracellular; the sequence is LESSTGHSNR. Residues 284 to 304 form a helical membrane-spanning segment; it reads FASFLTTWLAISNSFCNCVIY. Residues 305–349 are Cytoplasmic-facing; it reads SLSNSVFQRGLKRLSGAMCTSCASQTTANDPYTVRSKGPLNGCHI.

This sequence belongs to the G-protein coupled receptor 1 family. Not detected in the brain regions thalamus, putamen, caudate, frontal cortex, pons, hypothalamus, hippocampus.

The protein resides in the cell membrane. Functionally, orphan receptor. The chain is Probable G-protein coupled receptor 21 (GPR21) from Homo sapiens (Human).